A 449-amino-acid polypeptide reads, in one-letter code: GTPase Der (449 aa).

2 EngA-type G domains span residues 3 to 167 (SIVA…PDEP) and 175 to 350 (TNIA…EQYS). Residues 9 to 16 (GRPNVGKS), 56 to 60 (DTGGF), 119 to 122 (NKVD), 181 to 188 (GRPNVGKS), 228 to 232 (DTAGI), and 293 to 296 (NKWD) contribute to the GTP site. The region spanning 351–435 (RRVTTSELNR…PFRLLFRGRE (85 aa)) is the KH-like domain.

It belongs to the TRAFAC class TrmE-Era-EngA-EngB-Septin-like GTPase superfamily. EngA (Der) GTPase family. As to quaternary structure, associates with the 50S ribosomal subunit.

Functionally, GTPase that plays an essential role in the late steps of ribosome biogenesis. The polypeptide is GTPase Der (Trichlorobacter lovleyi (strain ATCC BAA-1151 / DSM 17278 / SZ) (Geobacter lovleyi)).